Here is a 322-residue protein sequence, read N- to C-terminus: Sideroflexin fsf1 (322 aa).

A run of 4 helical transmembrane segments spans residues 143 to 163 (SYIY…KIVP), 175 to 195 (VLGR…NVFL), 229 to 249 (TALS…LVLM), and 269 to 289 (LGLI…VFPA).

It belongs to the sideroflexin family.

The protein localises to the mitochondrion membrane. Its function is as follows. Mitochondrial amino-acid transporter that mediates transport of serine into mitochondria. In Schizosaccharomyces pombe (strain 972 / ATCC 24843) (Fission yeast), this protein is Sideroflexin fsf1.